The following is a 383-amino-acid chain: tRNA pseudouridine synthase B (383 aa).

The active-site Nucleophile is the Asp53.

Belongs to the pseudouridine synthase TruB family. Type 1 subfamily.

The catalysed reaction is uridine(55) in tRNA = pseudouridine(55) in tRNA. In terms of biological role, responsible for synthesis of pseudouridine from uracil-55 in the psi GC loop of transfer RNAs. This is tRNA pseudouridine synthase B from Tropheryma whipplei (strain TW08/27) (Whipple's bacillus).